A 469-amino-acid chain; its full sequence is Probable Xaa-Pro aminopeptidase PEPP (469 aa).

Asp265, Asp276, Glu399, and Glu439 together coordinate Mn(2+).

This sequence belongs to the peptidase M24B family. Mn(2+) serves as cofactor.

It carries out the reaction Release of any N-terminal amino acid, including proline, that is linked to proline, even from a dipeptide or tripeptide.. In terms of biological role, catalyzes the removal of a penultimate prolyl residue from the N-termini of peptides. The chain is Probable Xaa-Pro aminopeptidase PEPP (PEPP) from Coccidioides posadasii (strain C735) (Valley fever fungus).